The chain runs to 275 residues: Undecaprenyl-diphosphatase (275 aa).

A run of 8 helical transmembrane segments spans residues L2–I22, F43–Y63, W83–L103, M111–L131, V161–I181, Y186–L206, I225–L245, and P255–A275.

Belongs to the UppP family.

The protein localises to the cell membrane. The enzyme catalyses di-trans,octa-cis-undecaprenyl diphosphate + H2O = di-trans,octa-cis-undecaprenyl phosphate + phosphate + H(+). Functionally, catalyzes the dephosphorylation of undecaprenyl diphosphate (UPP). Confers resistance to bacitracin. The polypeptide is Undecaprenyl-diphosphatase (Lactobacillus delbrueckii subsp. bulgaricus (strain ATCC 11842 / DSM 20081 / BCRC 10696 / JCM 1002 / NBRC 13953 / NCIMB 11778 / NCTC 12712 / WDCM 00102 / Lb 14)).